The chain runs to 362 residues: 1-aminocyclopropane-1-carboxylate oxidase homolog 10 (362 aa).

The Fe2OG dioxygenase domain maps to 211 to 310 (KGLFMLCHYY…RISVACFFSS (100 aa)). Fe cation is bound by residues His-235, Asp-237, and His-291. Arg-301 contributes to the 2-oxoglutarate binding site.

Belongs to the iron/ascorbate-dependent oxidoreductase family. The cofactor is Fe(2+).

The sequence is that of 1-aminocyclopropane-1-carboxylate oxidase homolog 10 from Arabidopsis thaliana (Mouse-ear cress).